A 277-amino-acid polypeptide reads, in one-letter code: Ras suppressor protein 1 (277 aa).

Residues 1–23 are disordered; it reads MSKSLKKLVEESREKNQPEVDMS. At Ser-2 the chain carries N-acetylserine. A compositionally biased stretch (basic and acidic residues) spans 7–23; that stretch reads KLVEESREKNQPEVDMS. LRR repeat units lie at residues 41–63, 64–85, 87–109, 110–133, 135–156, 158–179, and 181–202; these read HITQ…AELK, NLEV…ISSL, KLKH…GSLP, ALEV…FFYL, TLRA…IGKL, KLQI…IGEL, and QLKE…LGNL. The tract at residues 250 to 277 is disordered; sequence MQANPEPPKKNNDKSKKISRKPLAAKNK. Residues 256-265 are compositionally biased toward basic and acidic residues; sequence PPKKNNDKSK.

Its function is as follows. Potentially plays a role in the Ras signal transduction pathway. Capable of suppressing v-Ras transformation in vitro. The sequence is that of Ras suppressor protein 1 (RSU1) from Bos taurus (Bovine).